Here is a 173-residue protein sequence, read N- to C-terminus: Crossover junction endodeoxyribonuclease RuvC (173 aa).

Residues Asp-8, Glu-67, and Asp-139 contribute to the active site. Positions 8, 67, and 139 each coordinate Mg(2+).

Belongs to the RuvC family. In terms of assembly, homodimer which binds Holliday junction (HJ) DNA. The HJ becomes 2-fold symmetrical on binding to RuvC with unstacked arms; it has a different conformation from HJ DNA in complex with RuvA. In the full resolvosome a probable DNA-RuvA(4)-RuvB(12)-RuvC(2) complex forms which resolves the HJ. Mg(2+) is required as a cofactor.

The protein resides in the cytoplasm. The enzyme catalyses Endonucleolytic cleavage at a junction such as a reciprocal single-stranded crossover between two homologous DNA duplexes (Holliday junction).. Functionally, the RuvA-RuvB-RuvC complex processes Holliday junction (HJ) DNA during genetic recombination and DNA repair. Endonuclease that resolves HJ intermediates. Cleaves cruciform DNA by making single-stranded nicks across the HJ at symmetrical positions within the homologous arms, yielding a 5'-phosphate and a 3'-hydroxyl group; requires a central core of homology in the junction. The consensus cleavage sequence is 5'-(A/T)TT(C/G)-3'. Cleavage occurs on the 3'-side of the TT dinucleotide at the point of strand exchange. HJ branch migration catalyzed by RuvA-RuvB allows RuvC to scan DNA until it finds its consensus sequence, where it cleaves and resolves the cruciform DNA. This is Crossover junction endodeoxyribonuclease RuvC from Shewanella putrefaciens (strain CN-32 / ATCC BAA-453).